The primary structure comprises 308 residues: Porphobilinogen deaminase (308 aa).

The residue at position 241 (cysteine 241) is an S-(dipyrrolylmethanemethyl)cysteine.

The protein belongs to the HMBS family. In terms of assembly, monomer. It depends on dipyrromethane as a cofactor.

It carries out the reaction 4 porphobilinogen + H2O = hydroxymethylbilane + 4 NH4(+). The protein operates within porphyrin-containing compound metabolism; protoporphyrin-IX biosynthesis; coproporphyrinogen-III from 5-aminolevulinate: step 2/4. Tetrapolymerization of the monopyrrole PBG into the hydroxymethylbilane pre-uroporphyrinogen in several discrete steps. This is Porphobilinogen deaminase from Staphylococcus aureus (strain MRSA252).